The chain runs to 403 residues: Phosphoglycerate kinase (403 aa).

Substrate-binding positions include aspartate 22–asparagine 24, arginine 37, histidine 60–arginine 63, arginine 119, and arginine 152. ATP is bound by residues lysine 202, glutamate 324, and glycine 354–threonine 357.

It belongs to the phosphoglycerate kinase family. In terms of assembly, monomer.

The protein resides in the cytoplasm. It catalyses the reaction (2R)-3-phosphoglycerate + ATP = (2R)-3-phospho-glyceroyl phosphate + ADP. It participates in carbohydrate degradation; glycolysis; pyruvate from D-glyceraldehyde 3-phosphate: step 2/5. In Maricaulis maris (strain MCS10) (Caulobacter maris), this protein is Phosphoglycerate kinase.